A 177-amino-acid chain; its full sequence is Large ribosomal subunit protein uL6 (177 aa).

It belongs to the universal ribosomal protein uL6 family. In terms of assembly, part of the 50S ribosomal subunit.

Its function is as follows. This protein binds to the 23S rRNA, and is important in its secondary structure. It is located near the subunit interface in the base of the L7/L12 stalk, and near the tRNA binding site of the peptidyltransferase center. The sequence is that of Large ribosomal subunit protein uL6 from Chromobacterium violaceum (strain ATCC 12472 / DSM 30191 / JCM 1249 / CCUG 213 / NBRC 12614 / NCIMB 9131 / NCTC 9757 / MK).